A 325-amino-acid polypeptide reads, in one-letter code: MASDSDLLDTKPAETRHPEKAHRPDQPTLRKPDWIRVRAPGSPEWAATNKIVKEHKLVTVCEEAGCPNIGECWAKKHATFMIMGDTCTRACAFCNVKTGLPRALDRNEPQRVADAVAKLGLSHVVITSVDRDDLSDGGARHFAEVIAAIRSLSPKTTIEVLTPDFLRKPGALEIVVAAKPDVFNHNLETVAGKYLGVRPGARYFHSLRLLQRVKELDPTLFTKSGIMLGLGEERQEVLQLMDDLRSADVDFMTIGQYLQPTKKHHAVARFVTPEEFNSYAEIGRAKGFLLMSSSPLTRSSHHAGEDFARLKAKRQALAPCAEAGQ.

Residues 1 to 31 (MASDSDLLDTKPAETRHPEKAHRPDQPTLRK) are disordered. Basic and acidic residues predominate over residues 8–31 (LDTKPAETRHPEKAHRPDQPTLRK). 7 residues coordinate [4Fe-4S] cluster: Cys-61, Cys-66, Cys-72, Cys-87, Cys-91, Cys-94, and Ser-300. A Radical SAM core domain is found at 73–289 (WAKKHATFMI…AEIGRAKGFL (217 aa)).

The protein belongs to the radical SAM superfamily. Lipoyl synthase family. [4Fe-4S] cluster serves as cofactor.

Its subcellular location is the cytoplasm. The enzyme catalyses [[Fe-S] cluster scaffold protein carrying a second [4Fe-4S](2+) cluster] + N(6)-octanoyl-L-lysyl-[protein] + 2 oxidized [2Fe-2S]-[ferredoxin] + 2 S-adenosyl-L-methionine + 4 H(+) = [[Fe-S] cluster scaffold protein] + N(6)-[(R)-dihydrolipoyl]-L-lysyl-[protein] + 4 Fe(3+) + 2 hydrogen sulfide + 2 5'-deoxyadenosine + 2 L-methionine + 2 reduced [2Fe-2S]-[ferredoxin]. Its pathway is protein modification; protein lipoylation via endogenous pathway; protein N(6)-(lipoyl)lysine from octanoyl-[acyl-carrier-protein]: step 2/2. Its function is as follows. Catalyzes the radical-mediated insertion of two sulfur atoms into the C-6 and C-8 positions of the octanoyl moiety bound to the lipoyl domains of lipoate-dependent enzymes, thereby converting the octanoylated domains into lipoylated derivatives. This Methylocella silvestris (strain DSM 15510 / CIP 108128 / LMG 27833 / NCIMB 13906 / BL2) protein is Lipoyl synthase.